The following is a 240-amino-acid chain: Ribonuclease HII (240 aa).

The RNase H type-2 domain maps to 29–220; that stretch reads EPIAGVDEAG…VRRAAGLEPL (192 aa). Residues D35, E36, and D129 each coordinate a divalent metal cation.

The protein belongs to the RNase HII family. Mn(2+) is required as a cofactor. Mg(2+) serves as cofactor.

The protein resides in the cytoplasm. It carries out the reaction Endonucleolytic cleavage to 5'-phosphomonoester.. Functionally, endonuclease that specifically degrades the RNA of RNA-DNA hybrids. This is Ribonuclease HII from Nocardioides sp. (strain ATCC BAA-499 / JS614).